A 310-amino-acid polypeptide reads, in one-letter code: tRNA dimethylallyltransferase (310 aa).

Glycine 13–threonine 20 provides a ligand contact to ATP. Substrate is bound at residue threonine 15 to threonine 20. Interaction with substrate tRNA regions lie at residues aspartate 38–leucine 41, glutamine 162–arginine 166, arginine 243–arginine 248, and lysine 276–arginine 283.

The protein belongs to the IPP transferase family. As to quaternary structure, monomer. The cofactor is Mg(2+).

The catalysed reaction is adenosine(37) in tRNA + dimethylallyl diphosphate = N(6)-dimethylallyladenosine(37) in tRNA + diphosphate. Functionally, catalyzes the transfer of a dimethylallyl group onto the adenine at position 37 in tRNAs that read codons beginning with uridine, leading to the formation of N6-(dimethylallyl)adenosine (i(6)A). The protein is tRNA dimethylallyltransferase of Vibrio atlanticus (strain LGP32) (Vibrio splendidus (strain Mel32)).